A 157-amino-acid polypeptide reads, in one-letter code: uncharacterized protein (157 aa).

The 138-residue stretch at 9–146 folds into the N-acetyltransferase domain; that stretch reads LLINYKTLDE…GDFYVWHPET (138 aa).

This is an uncharacterized protein from Bacillus cereus (strain ATCC 10987 / NRS 248).